A 448-amino-acid chain; its full sequence is MRYFMSYSAPNIGFVSLGCPKNLVDSERILTELRTDGYNIIPTYENADLVIVNTCGFIDSAVQESLEAIGEALEENGKVIVTGCLGAKENQIREVHPKVLEITGPHSYEAVMEHVHKYVPRPERNPYTSLVPAQGVKLTPKHYAYLKISEGCDHKCTFCIIPSLRGDLDSRPITQVLDEAKRLVDSGVKELLVVSQDTSAYALDQSKENQNKTVFWNGAPIKNNLITLCRQLGTLGAWIRLHYVYPYPHVDDLIPLMAEGKILPYLDIPLQHASPKVLKAMKRPGSVERVLERIQKWREICPELTLRSTFIVGFPGETEEDFQMLLDFLQEAQLDRVGCFKFSPVEGAVATDMADQVPEEVKEQRFQRFMELQQQISAQRLQQKIGKTLPVIIDDIDEDGIIGRSMADAPEIDGVVYVDNRSESAVKIGDIIQVAITNADEYDLWGTC.

Residues 10 to 120 (PNIGFVSLGC…VMEHVHKYVP (111 aa)) enclose the MTTase N-terminal domain. [4Fe-4S] cluster contacts are provided by cysteine 19, cysteine 55, cysteine 84, cysteine 152, cysteine 156, and cysteine 159. A Radical SAM core domain is found at 138–379 (LTPKHYAYLK…MELQQQISAQ (242 aa)). The TRAM domain occupies 382 to 448 (QQKIGKTLPV…ADEYDLWGTC (67 aa)).

It belongs to the methylthiotransferase family. RimO subfamily. [4Fe-4S] cluster serves as cofactor.

It localises to the cytoplasm. The enzyme catalyses L-aspartate(89)-[ribosomal protein uS12]-hydrogen + (sulfur carrier)-SH + AH2 + 2 S-adenosyl-L-methionine = 3-methylsulfanyl-L-aspartate(89)-[ribosomal protein uS12]-hydrogen + (sulfur carrier)-H + 5'-deoxyadenosine + L-methionine + A + S-adenosyl-L-homocysteine + 2 H(+). Its function is as follows. Catalyzes the methylthiolation of an aspartic acid residue of ribosomal protein uS12. In Mannheimia succiniciproducens (strain KCTC 0769BP / MBEL55E), this protein is Ribosomal protein uS12 methylthiotransferase RimO.